A 599-amino-acid chain; its full sequence is Sulfite reductase [NADPH] flavoprotein alpha-component (599 aa).

The 139-residue stretch at 63–201 folds into the Flavodoxin-like domain; sequence ITVISASQTG…LATAWRKQVV (139 aa). Residues 69–74, 116–119, and 152–161 each bind FMN; these read SQTGNA, STQG, and LGDTSYENFC. Residues 234-448 enclose the FAD-binding FR-type domain; it reads EQPLTAQLAV…IEHNDNFRLP (215 aa). Residues Thr322, His356, 386 to 389, 404 to 406, Tyr410, and 419 to 422 contribute to the FAD site; these read RLYS, TVG, and GGAS. NADP(+) is bound by residues 519–520, 525–529, and Asp561; these read SR and KVYVQ. Tyr599 contributes to the FAD binding site.

The protein belongs to the NADPH-dependent sulphite reductase flavoprotein subunit CysJ family. It in the N-terminal section; belongs to the flavodoxin family. This sequence in the C-terminal section; belongs to the flavoprotein pyridine nucleotide cytochrome reductase family. As to quaternary structure, alpha(8)-beta(8). The alpha component is a flavoprotein, the beta component is a hemoprotein. FAD is required as a cofactor. FMN serves as cofactor.

It catalyses the reaction hydrogen sulfide + 3 NADP(+) + 3 H2O = sulfite + 3 NADPH + 4 H(+). It functions in the pathway sulfur metabolism; hydrogen sulfide biosynthesis; hydrogen sulfide from sulfite (NADPH route): step 1/1. Functionally, component of the sulfite reductase complex that catalyzes the 6-electron reduction of sulfite to sulfide. This is one of several activities required for the biosynthesis of L-cysteine from sulfate. The flavoprotein component catalyzes the electron flow from NADPH -&gt; FAD -&gt; FMN to the hemoprotein component. The polypeptide is Sulfite reductase [NADPH] flavoprotein alpha-component (Serratia proteamaculans (strain 568)).